We begin with the raw amino-acid sequence, 224 residues long: Putative cytochrome c-type biogenesis protein DbsD-like (224 aa).

Transmembrane regions (helical) follow at residues 32-52 (FIFLSGLFTSLSPCIISILPV), 74-94 (FLFCLGTISSFITLGILATLI), 104-124 (GIPTISAVVIIYMGLNLLNIV), 150-170 (GIGIAISSCSTPIFVTLLVWI), and 176-196 (IFTGLIFILIYSIGYIFPIII).

This sequence belongs to the DsbD family.

It is found in the plastid. It localises to the chloroplast membrane. In terms of biological role, could be involved in cytochrome c synthesis. The polypeptide is Putative cytochrome c-type biogenesis protein DbsD-like (Pyropia yezoensis (Susabi-nori)).